The chain runs to 189 residues: Protein GrpE (189 aa).

The interval 1–37 (MSDSSKEKKKKFADMVSRQKGDDQQSDNHKQTDDLNE) is disordered. Over residues 17–33 (SRQKGDDQQSDNHKQTD) the composition is skewed to basic and acidic residues.

Belongs to the GrpE family. As to quaternary structure, homodimer.

The protein resides in the cytoplasm. Its function is as follows. Participates actively in the response to hyperosmotic and heat shock by preventing the aggregation of stress-denatured proteins, in association with DnaK and GrpE. It is the nucleotide exchange factor for DnaK and may function as a thermosensor. Unfolded proteins bind initially to DnaJ; upon interaction with the DnaJ-bound protein, DnaK hydrolyzes its bound ATP, resulting in the formation of a stable complex. GrpE releases ADP from DnaK; ATP binding to DnaK triggers the release of the substrate protein, thus completing the reaction cycle. Several rounds of ATP-dependent interactions between DnaJ, DnaK and GrpE are required for fully efficient folding. This is Protein GrpE from Wolbachia pipientis wMel.